The sequence spans 233 residues: Probable septum site-determining protein MinC (233 aa).

The interval 104–124 (QKMATPEPAPAPAPVVDPNAP) is disordered.

It belongs to the MinC family. In terms of assembly, interacts with MinD and FtsZ.

Functionally, cell division inhibitor that blocks the formation of polar Z ring septums. Rapidly oscillates between the poles of the cell to destabilize FtsZ filaments that have formed before they mature into polar Z rings. Prevents FtsZ polymerization. This chain is Probable septum site-determining protein MinC, found in Serratia proteamaculans (strain 568).